A 468-amino-acid polypeptide reads, in one-letter code: UDP-N-acetylmuramate--L-alanine ligase (468 aa).

112 to 118 (GTHGKTT) contributes to the ATP binding site.

Belongs to the MurCDEF family.

The protein resides in the cytoplasm. It catalyses the reaction UDP-N-acetyl-alpha-D-muramate + L-alanine + ATP = UDP-N-acetyl-alpha-D-muramoyl-L-alanine + ADP + phosphate + H(+). It functions in the pathway cell wall biogenesis; peptidoglycan biosynthesis. Functionally, cell wall formation. The polypeptide is UDP-N-acetylmuramate--L-alanine ligase (Bordetella bronchiseptica (strain ATCC BAA-588 / NCTC 13252 / RB50) (Alcaligenes bronchisepticus)).